Reading from the N-terminus, the 434-residue chain is Trigger factor (434 aa).

Residues 160–245 enclose the PPIase FKBP-type domain; sequence GDKVKMNFVG…LTEVLAANLP (86 aa).

It belongs to the FKBP-type PPIase family. Tig subfamily.

It is found in the cytoplasm. The enzyme catalyses [protein]-peptidylproline (omega=180) = [protein]-peptidylproline (omega=0). Its function is as follows. Involved in protein export. Acts as a chaperone by maintaining the newly synthesized protein in an open conformation. Functions as a peptidyl-prolyl cis-trans isomerase. This is Trigger factor from Shewanella sp. (strain ANA-3).